We begin with the raw amino-acid sequence, 147 residues long: Large ribosomal subunit protein uL15 (147 aa).

Residues 1–28 are compositionally biased toward basic residues; the sequence is MIRRRKKVRKLRGSHTHGWGCKKKHRGG. Positions 1–43 are disordered; the sequence is MIRRRKKVRKLRGSHTHGWGCKKKHRGGGSKGGRGMAGTGKRN. The span at 29–38 shows a compositional bias: gly residues; the sequence is GSKGGRGMAG.

Belongs to the universal ribosomal protein uL15 family. In terms of assembly, part of the 50S ribosomal subunit.

Functionally, binds to the 23S rRNA. In Pyrococcus furiosus (strain ATCC 43587 / DSM 3638 / JCM 8422 / Vc1), this protein is Large ribosomal subunit protein uL15.